Reading from the N-terminus, the 2278-residue chain is Protein Ycf2 (2278 aa).

1632–1639 serves as a coordination point for ATP; it reads GSIGTGRS.

The protein belongs to the Ycf2 family.

It localises to the plastid. Its subcellular location is the chloroplast stroma. Probable ATPase of unknown function. Its presence in a non-photosynthetic plant (Epifagus virginiana) and experiments in tobacco indicate that it has an essential function which is probably not related to photosynthesis. The chain is Protein Ycf2 from Solanum tuberosum (Potato).